Here is a 375-residue protein sequence, read N- to C-terminus: FK506-binding protein 4 (375 aa).

Disordered regions lie at residues 55 to 78 (GFED…EEEI) and 127 to 265 (PPDF…SKMT). Composition is skewed to acidic residues over residues 56-66 (FEDDYDEEEQE) and 131-173 (FDQD…DPDR). Basic and acidic residues predominate over residues 196-216 (DSKKRAAEKPVKETAAKKLKA). Positions 217–230 (DASAASAASTPTKA) are enriched in low complexity. The segment covering 231-261 (IETKGEKQTKGAKDTKPKSETVEKKTVDKST) has biased composition (basic and acidic residues). The PPIase FKBP-type domain maps to 289–375 (GQKVGMRYVG…VFDVKLVEIK (87 aa)).

Belongs to the FKBP-type PPIase family. FKBP3/4 subfamily. In terms of assembly, binds to histones H3 and H4.

The protein localises to the nucleus. The catalysed reaction is [protein]-peptidylproline (omega=180) = [protein]-peptidylproline (omega=0). Inhibited by both FK506 and rapamycin. PPIase that acts as a histone chaperone. Histone proline isomerase that increases the rate of cis-trans isomerization at prolines on the histone H3 N-terminal tail. Proline isomerization influences H3 methylation thereby regulating gene expression. This is FK506-binding protein 4 (FPR4) from Mycosarcoma maydis (Corn smut fungus).